Consider the following 302-residue polypeptide: Beta-lactamase (302 aa).

The span at 1-11 (MADRRRVHAWA) shows a compositional bias: basic residues. Residues 1–29 (MADRRRVHAWARARPAAPEPAPPTPSAAA) form the signal peptide. Residues 1 to 43 (MADRRRVHAWARARPAAPEPAPPTPSAAAPSVAPGPAATPPDP) are disordered. The segment covering 26–36 (SAAAPSVAPGP) has biased composition (low complexity). The active-site Acyl-ester intermediate is the S85. Residue S143 participates in substrate binding. The active-site Proton acceptor is the E179. Residue 247–249 (KTG) coordinates substrate.

It belongs to the class-A beta-lactamase family.

The protein localises to the secreted. It catalyses the reaction a beta-lactam + H2O = a substituted beta-amino acid. Active on penicillins but not on cephalosporins. The sequence is that of Beta-lactamase (bla) from Amycolatopsis lactamdurans (Nocardia lactamdurans).